A 304-amino-acid chain; its full sequence is Flagellin (304 aa).

The protein belongs to the bacterial flagellin family. As to quaternary structure, interacts with FliW in a 1:1 complex. Forms a 3-way complex of Hag, FliS and FliW, in which Flis and FliW do not directly interact.

Its subcellular location is the secreted. The protein resides in the bacterial flagellum. It is found in the cell wall. Flagellin is the subunit which polymerizes to form the filaments of bacterial flagella. Assembly into flagella requires FliW. Acts as a homeostatic autoinhibitory regulator to control its own cytoplasmic levels. Partner switching by flagellin between FliW and CsrA provides a flagellar assembly checkpoint to tightly control the timing of flagellin synthesis. Flagellin binds to assembly factor FliW, freeing translation regulator CsrA to repress translation of the flagellin mRNA. When the flagellar hook is assembled flagellin is secreted, depleting intracellular flagellin, which frees FliW to interact with CsrA. This derepresses flagellin translation and provides protein for flagellar assembly. Once the flagellar filament is completed cytoplasmic flagellin levels rise and CsrA translation repression of flagellin reinitiates. The protein is Flagellin of Bacillus subtilis (strain 168).